Here is a 166-residue protein sequence, read N- to C-terminus: Endoribonuclease YbeY (166 aa).

Zn(2+) contacts are provided by histidine 132, histidine 136, and histidine 142.

Belongs to the endoribonuclease YbeY family. Requires Zn(2+) as cofactor.

Its subcellular location is the cytoplasm. Its function is as follows. Single strand-specific metallo-endoribonuclease involved in late-stage 70S ribosome quality control and in maturation of the 3' terminus of the 16S rRNA. The polypeptide is Endoribonuclease YbeY (Clostridium acetobutylicum (strain ATCC 824 / DSM 792 / JCM 1419 / IAM 19013 / LMG 5710 / NBRC 13948 / NRRL B-527 / VKM B-1787 / 2291 / W)).